The chain runs to 287 residues: N-acetylmannosamine kinase (287 aa).

ATP-binding positions include 5–12 and 131–138; these read AIDIGGTK and GVGGGIII. The Zn(2+) site is built by His-155, Cys-165, Cys-167, and Cys-172.

Belongs to the ROK (NagC/XylR) family. NanK subfamily. In terms of assembly, homodimer.

The catalysed reaction is an N-acyl-D-mannosamine + ATP = an N-acyl-D-mannosamine 6-phosphate + ADP + H(+). The protein operates within amino-sugar metabolism; N-acetylneuraminate degradation; D-fructose 6-phosphate from N-acetylneuraminate: step 2/5. Its function is as follows. Catalyzes the phosphorylation of N-acetylmannosamine (ManNAc) to ManNAc-6-P. This chain is N-acetylmannosamine kinase, found in Vibrio cholerae serotype O1 (strain ATCC 39541 / Classical Ogawa 395 / O395).